The chain runs to 222 residues: MRLILPADTEGIFLERKSRFTGVALVEGKKTLIHIHNTGRLPLLKKGKRVLLKRAESDRRKTGWDLLAVEHRDEFVFVHSGFHSIVAGKILEELFPGSTIESEKRFENSRFDFLIDRRTFVEVKGCTYEEDGVAMFPDAPTERGRRHIEELISSVKSGFKALLLILVFLESDCFLPNRNVDPAFSRVFWRALKSGVNIDVFRVKYDGEYLCSTEKLSICEEV.

The protein belongs to the SfsA family.

This Thermotoga petrophila (strain ATCC BAA-488 / DSM 13995 / JCM 10881 / RKU-1) protein is Sugar fermentation stimulation protein homolog.